The sequence spans 142 residues: Large ribosomal subunit protein uL13 (142 aa).

This sequence belongs to the universal ribosomal protein uL13 family. Part of the 50S ribosomal subunit.

Functionally, this protein is one of the early assembly proteins of the 50S ribosomal subunit, although it is not seen to bind rRNA by itself. It is important during the early stages of 50S assembly. The protein is Large ribosomal subunit protein uL13 of Pseudomonas putida (strain W619).